We begin with the raw amino-acid sequence, 581 residues long: Rhodanese-like domain-containing protein 6 (581 aa).

Residues 158-258 enclose the Rhodanese domain; it reads ENKELVLLDA…YLEQFPSGGF (101 aa). Residue cysteine 216 is the Cysteine persulfide intermediate of the active site.

This chain is Rhodanese-like domain-containing protein 6 (STR6), found in Arabidopsis thaliana (Mouse-ear cress).